The sequence spans 281 residues: Putrescine transport system permease protein PotI (281 aa).

At 1–13 the chain is on the cytoplasmic side; sequence MNNLPVVRSPWRI. Residues 14 to 33 form a helical membrane-spanning segment; that stretch reads VILLLGFTFLYAPMLMLVIY. The Periplasmic segment spans residues 34 to 68; the sequence is SFNSSKLVTVWAGWSTRWYGELLRDDAMMSAVGLS. An ABC transmembrane type-1 domain is found at 65–260; the sequence is VGLSLTIAAC…GAVGIVGFIA (196 aa). The chain crosses the membrane as a helical span at residues 69-88; that stretch reads LTIAACAATAAAILGTIAAV. Over 89–115 the chain is Cytoplasmic; sequence VLVRFGRFRGSNGFAFMITAPLVMPDV. Residues 116–135 form a helical membrane-spanning segment; that stretch reads ITGLSLLLLFVALAHAIGWP. Residues 136–140 are Periplasmic-facing; it reads ADRGM. A helical membrane pass occupies residues 141–160; sequence LTIWLAHVTFCTAYVAVVIS. The Cytoplasmic portion of the chain corresponds to 161–186; the sequence is SRLRELDRSIEEAAMDLGATPLKVFF. A helical transmembrane segment spans residues 187-206; sequence VITLPMIMPAIISGWLLAFT. Over 207–243 the chain is Periplasmic; sequence LSLDDLVIASFVSGPGATTLPMLVFSSVRMGVNPEIN. The helical transmembrane segment at 244-263 threads the bilayer; the sequence is ALATLILGAVGIVGFIAWYL. Over 264-281 the chain is Cytoplasmic; the sequence is MARAEKQRIRDIQRARRG.

It belongs to the binding-protein-dependent transport system permease family. CysTW subfamily. As to quaternary structure, the complex is composed of two ATP-binding proteins (PotG), two transmembrane proteins (PotH and PotI) and a solute-binding protein (PotF).

The protein resides in the cell inner membrane. In terms of biological role, part of the ABC transporter complex PotFGHI involved in putrescine uptake. Responsible for the translocation of the substrate across the membrane. This chain is Putrescine transport system permease protein PotI, found in Escherichia coli O6:H1 (strain CFT073 / ATCC 700928 / UPEC).